The following is a 580-amino-acid chain: Glutamine--tRNA ligase (580 aa).

Residues 51-61 carry the 'HIGH' region motif; sequence PEPNGYLHIGH. Residues 52–54 and 58–64 each bind ATP; these read EPN and HIGHAKS. Asp-84 and Tyr-233 together coordinate L-glutamine. Residues Thr-252 and 287 to 288 contribute to the ATP site; that span reads RL. The 'KMSKS' region signature appears at 294–298; sequence ITSKR.

It belongs to the class-I aminoacyl-tRNA synthetase family. Monomer.

It is found in the cytoplasm. The enzyme catalyses tRNA(Gln) + L-glutamine + ATP = L-glutaminyl-tRNA(Gln) + AMP + diphosphate. In Ralstonia nicotianae (strain ATCC BAA-1114 / GMI1000) (Ralstonia solanacearum), this protein is Glutamine--tRNA ligase.